Reading from the N-terminus, the 522-residue chain is Glucans biosynthesis protein G (522 aa).

A signal peptide spans 1–33 (MPNNKFFVKSSKASLRWLGATVLLTLYALPSWA).

It belongs to the OpgD/OpgG family.

It is found in the periplasm. It participates in glycan metabolism; osmoregulated periplasmic glucan (OPG) biosynthesis. Its function is as follows. Involved in the biosynthesis of osmoregulated periplasmic glucans (OPGs). The chain is Glucans biosynthesis protein G from Sodalis glossinidius (strain morsitans).